We begin with the raw amino-acid sequence, 432 residues long: Luc7-like protein 3 (432 aa).

Position 1 is an N-acetylmethionine (methionine 1). Phosphoserine occurs at positions 3, 110, and 115. Residues 124–181 (KNEEKIQVLTDKIDVLLQQIEELGSEGKVEEAQGMMKLVEQLKEERELLRSTTSTIES) adopt a coiled-coil conformation. Lysine 231 carries the post-translational modification N6-acetyllysine. The span at 234 to 287 (LRKRTEEPDRDERLKKEKQEREEREKEREREREERERKRRREEEEREKERARDR) shows a compositional bias: basic and acidic residues. The segment at 234-432 (LRKRTEEPDR…IKSEGDTQSN (199 aa)) is disordered. Over residues 288-301 (ERRKRSRSRSRHSS) the composition is skewed to basic residues. Positions 302–311 (RTSDRRCSRS) are enriched in basic and acidic residues. Over residues 312 to 367 (RDHKRSRSRERRRSRSRDRRRSRSHDRSERKHRSRSRDRRRSKSRDRKSYKHRSKS) the composition is skewed to basic residues. The segment covering 368–414 (RDREQDRKSKEKEKRGSDDKKSSVKSSSREKQSEDTNTESKESDTKN) has biased composition (basic and acidic residues). The residue at position 420 (serine 420) is a Phosphoserine. Basic and acidic residues predominate over residues 421-432 (EDIKSEGDTQSN). A Glycyl lysine isopeptide (Lys-Gly) (interchain with G-Cter in SUMO1); alternate cross-link involves residue lysine 424. Residue lysine 424 forms a Glycyl lysine isopeptide (Lys-Gly) (interchain with G-Cter in SUMO2); alternate linkage. 2 positions are modified to phosphoserine: serine 425 and serine 431.

This sequence belongs to the Luc7 family. As to quaternary structure, may interact with SFRS1 and form homodimers. Interacts with JMJD6. Interacts with RBM25. Interacts with RSRC1 (via Arg/Ser-rich domain). Interacts with RRP1B.

Its subcellular location is the nucleus speckle. Its function is as follows. Binds cAMP regulatory element DNA sequence. May play a role in RNA splicing. The protein is Luc7-like protein 3 (LUC7L3) of Bos taurus (Bovine).